A 431-amino-acid chain; its full sequence is Keratin, type I cytoskeletal 40 (431 aa).

Positions 1–89 (MASDCSPTGC…CEDGVFNSNE (89 aa)) are head. The 312-residue stretch at 89 to 400 (EKETMQFLND…GLLDSEDSRL (312 aa)) folds into the IF rod domain. The interval 90-124 (KETMQFLNDRLASYLEKVRGLEELNAELECRIREQ) is coil 1A. Positions 125–135 (CEEDVPLVCPD) are linker 1. Residues 136 to 236 (YQCYFDTIED…HEEEVNVLRG (101 aa)) form a coil 1B region. Residues 237-252 (QLGDRLSVELDTAPTT) are linker 12. The coil 2 stretch occupies residues 253–396 (DLNRVLDEMR…NTYQGLLDSE (144 aa)). The tail stretch occupies residues 397–431 (DSRLPCNPCSATSMSNDTCEPCSAYVICTVENSCP).

Belongs to the intermediate filament family. As to quaternary structure, heterotetramer of two type I and two type II keratins.

Its function is as follows. May play a role in late hair differentiation. In Bos taurus (Bovine), this protein is Keratin, type I cytoskeletal 40 (KRT40).